Reading from the N-terminus, the 75-residue chain is Small ribosomal subunit protein bS18 (75 aa).

It belongs to the bacterial ribosomal protein bS18 family. As to quaternary structure, part of the 30S ribosomal subunit. Forms a tight heterodimer with protein bS6.

Binds as a heterodimer with protein bS6 to the central domain of the 16S rRNA, where it helps stabilize the platform of the 30S subunit. The protein is Small ribosomal subunit protein bS18 of Pectobacterium atrosepticum (strain SCRI 1043 / ATCC BAA-672) (Erwinia carotovora subsp. atroseptica).